A 341-amino-acid polypeptide reads, in one-letter code: Glyceraldehyde-3-phosphate dehydrogenase 3 (341 aa).

NAD(+) contacts are provided by residues 13–14 (RI), Asp-35, and Arg-85. D-glyceraldehyde 3-phosphate-binding positions include 157–159 (SCT), Thr-188, 217–218 (TG), and Arg-240. Cys-158 (nucleophile) is an active-site residue. Asn-322 lines the NAD(+) pocket.

The protein belongs to the glyceraldehyde-3-phosphate dehydrogenase family. In terms of assembly, homotetramer.

Its subcellular location is the cytoplasm. It catalyses the reaction D-glyceraldehyde 3-phosphate + phosphate + NAD(+) = (2R)-3-phospho-glyceroyl phosphate + NADH + H(+). It functions in the pathway carbohydrate degradation; glycolysis; pyruvate from D-glyceraldehyde 3-phosphate: step 1/5. This chain is Glyceraldehyde-3-phosphate dehydrogenase 3 (gpd-3), found in Caenorhabditis elegans.